The following is an 86-amino-acid chain: Probable weak neurotoxin NNAM3 (86 aa).

A signal peptide spans 1–21; that stretch reads MKTLLLTLVVVTIVCLDLGYT. Intrachain disulfides connect Cys24–Cys45, Cys27–Cys32, Cys38–Cys63, Cys67–Cys78, and Cys79–Cys84.

Belongs to the three-finger toxin family. Ancestral subfamily. Orphan group II sub-subfamily. In terms of tissue distribution, expressed by the venom gland.

It is found in the secreted. Its function is as follows. Binds with low affinity to muscular (alpha-1-beta-1-delta-epsilon/CHRNA1-CHRNB1-CHRND-CHRNE) and very low affinity to neuronal (alpha-7/CHRNA7) nicotinic acetylcholine receptor (nAChR). The sequence is that of Probable weak neurotoxin NNAM3 from Naja atra (Chinese cobra).